Here is a 60-residue protein sequence, read N- to C-terminus: Large ribosomal subunit protein bL32 (60 aa).

Residues M1 to P44 form a disordered region. A compositionally biased stretch (basic and acidic residues) spans S11–L22.

This sequence belongs to the bacterial ribosomal protein bL32 family.

This is Large ribosomal subunit protein bL32 from Pseudomonas fluorescens (strain SBW25).